Reading from the N-terminus, the 70-residue chain is UPF0270 protein VP2791 (70 aa).

This sequence belongs to the UPF0270 family.

The polypeptide is UPF0270 protein VP2791 (Vibrio parahaemolyticus serotype O3:K6 (strain RIMD 2210633)).